We begin with the raw amino-acid sequence, 251 residues long: NADPH-dependent oxidoreductase (251 aa).

Belongs to the flavin oxidoreductase frp family. FMN serves as cofactor.

Its function is as follows. Reduces FMN, organic nitro compounds and disulfide DTNB. Involved in maintenance of the cellular redox state and the disulfide stress response. The chain is NADPH-dependent oxidoreductase (nfrA) from Staphylococcus aureus (strain Mu50 / ATCC 700699).